The primary structure comprises 290 residues: tRNA-cytidine(32) 2-sulfurtransferase (290 aa).

The PP-loop motif signature appears at Ser-36–Ser-41. [4Fe-4S] cluster is bound by residues Cys-111, Cys-114, and Cys-202. Residues Asp-259–Arg-290 form a disordered region. Positions Leu-262–Gly-273 are enriched in acidic residues.

This sequence belongs to the TtcA family. As to quaternary structure, homodimer. Mg(2+) is required as a cofactor. It depends on [4Fe-4S] cluster as a cofactor.

It localises to the cytoplasm. It catalyses the reaction cytidine(32) in tRNA + S-sulfanyl-L-cysteinyl-[cysteine desulfurase] + AH2 + ATP = 2-thiocytidine(32) in tRNA + L-cysteinyl-[cysteine desulfurase] + A + AMP + diphosphate + H(+). Its pathway is tRNA modification. Its function is as follows. Catalyzes the ATP-dependent 2-thiolation of cytidine in position 32 of tRNA, to form 2-thiocytidine (s(2)C32). The sulfur atoms are provided by the cysteine/cysteine desulfurase (IscS) system. The chain is tRNA-cytidine(32) 2-sulfurtransferase from Anaeromyxobacter dehalogenans (strain 2CP-C).